A 157-amino-acid polypeptide reads, in one-letter code: Lectin (157 aa).

Cysteines 37 and 54 form a disulfide.

As to quaternary structure, homodimer. As to expression, detected in fruits (at protein level).

The protein resides in the secreted. Functionally, binds with high affinity specifically to chito-oligosaccharides. May play a role in plant defense against pathogens by directly binding with the chitin cell wall. Forms filamentous structures at higher concentrations and may promote wound healing by forming filaments with phloem proteins like PP1. The chain is Lectin from Coccinia grandis (Ivy gourd).